The primary structure comprises 310 residues: Aspartate carbamoyltransferase catalytic subunit (310 aa).

2 residues coordinate carbamoyl phosphate: Arg57 and Thr58. Residue Lys86 coordinates L-aspartate. Residues Arg107, His135, and Gln138 each coordinate carbamoyl phosphate. L-aspartate-binding residues include Arg168 and Arg229. Leu268 and Pro269 together coordinate carbamoyl phosphate.

This sequence belongs to the aspartate/ornithine carbamoyltransferase superfamily. ATCase family. Heterooligomer of catalytic and regulatory chains.

It carries out the reaction carbamoyl phosphate + L-aspartate = N-carbamoyl-L-aspartate + phosphate + H(+). It functions in the pathway pyrimidine metabolism; UMP biosynthesis via de novo pathway; (S)-dihydroorotate from bicarbonate: step 2/3. Its function is as follows. Catalyzes the condensation of carbamoyl phosphate and aspartate to form carbamoyl aspartate and inorganic phosphate, the committed step in the de novo pyrimidine nucleotide biosynthesis pathway. In Thermococcus onnurineus (strain NA1), this protein is Aspartate carbamoyltransferase catalytic subunit.